Consider the following 74-residue polypeptide: O-conotoxin GeXXXIA (74 aa).

Positions 1-22 (MKLTCVLIITVLFLTACQLTTA) are cleaved as a signal peptide. A propeptide spanning residues 23–33 (VTYSRGEHKHR) is cleaved from the precursor.

It belongs to the conotoxin O1 superfamily. Homodimer; disulfide-linked. In terms of processing, may contain 2 intrachain disulfide bonds and probably one interchain disulfide bond forming the homodimer. The disulfide pairing is not important for activity towards the different nAChR subtypes, since this peptide without disulfide bond or with different disulfide bonds shows the same activity. Expressed by the venom duct.

Its subcellular location is the secreted. Functionally, the activity of this natural homodimer has not been tested due to low abundance. The synthetic linear peptide has been refolded, giving 4 different monomeric isomers (m1 to m4) with 2 disulfide bonds each. All isomers potently inhibit rat alpha-1-beta-1-delta-epsilon/CHRNA1-CHRNB1-CHRND-CHRNE and human alpha-9-alpha-10/CHRNA9-CHRNA10 nicotinic acetylcholine receptors (nAChR). In addition, they show a modest inhibition at human alpha-3-beta-2/CHRNA3-CHRNB2, alpha-3-beta-4/CHRNA3-CHRNB4, alpha-7/CHRNA7, and alpha-4-beta-4/CHRNA4-CHRNB4. The synthetic monomer peptide without disulfide bonds shows a potent activity on alpha-9-alpha-10/CHRNA9 and CHRNA10 (IC(50)=16.2 nM). This linear peptide does not act as a competitive antagonist, or as a channel pore blocker of nAChR. This is O-conotoxin GeXXXIA from Conus generalis (General cone).